Here is a 428-residue protein sequence, read N- to C-terminus: L-glutamyl-[BtrI acyl-carrier protein] decarboxylase (428 aa).

Position 49 is an N6-(pyridoxal phosphate)lysine (Lys-49). Residues Gly-228, 269–272, and Tyr-375 each bind pyridoxal 5'-phosphate; that span reads ESGR. 2 residues coordinate substrate: Arg-272 and Tyr-375.

This sequence belongs to the Orn/Lys/Arg decarboxylase class-II family. Homodimer. Pyridoxal 5'-phosphate serves as cofactor.

The enzyme catalyses gamma-L-glutamyl-[BtrI ACP] + H(+) = 4-aminobutanoyl-[BtrI ACP] + CO2. Its pathway is antibiotic biosynthesis; butirosin biosynthesis. Functionally, pyridoxal phosphate-dependent decarboxylase that catalyzes 1 step in the biosynthesis of the side chain of the aminoglycoside antibiotics in the biosynthetic pathway of butirosin. Able to decarboxylate L-ornithine, L-arginine, L-lysine, but not L-glutamate or any D-amino acids. Has low activity with substrates not bound to an acyl-carrier protein. The polypeptide is L-glutamyl-[BtrI acyl-carrier protein] decarboxylase (btrK) (Niallia circulans (Bacillus circulans)).